Here is a 448-residue protein sequence, read N- to C-terminus: Beta-glucosidase B (448 aa).

E167 functions as the Proton donor in the catalytic mechanism. The Nucleophile role is filled by E356.

This sequence belongs to the glycosyl hydrolase 1 family.

The enzyme catalyses Hydrolysis of terminal, non-reducing beta-D-glucosyl residues with release of beta-D-glucose.. The sequence is that of Beta-glucosidase B (bglB) from Paenibacillus polymyxa (Bacillus polymyxa).